A 131-amino-acid chain; its full sequence is Leptin receptor gene-related protein (131 aa).

Helical transmembrane passes span 7–27 (LVAL…GCAL), 32–52 (VYWP…HFIA), 69–89 (LAYF…VILA), and 100–120 (GLVL…FLVF).

This sequence belongs to the OB-RGRP/VPS55 family. In terms of assembly, interacts with LEPR. Interacts with RAB13.

It localises to the golgi apparatus membrane. The protein resides in the endosome membrane. Functionally, negatively regulates leptin receptor (LEPR) cell surface expression, and thus decreases response to leptin/LEP. Negatively regulates growth hormone (GH) receptor cell surface expression in liver. May play a role in liver resistance to GH during periods of reduced nutrient availability. The sequence is that of Leptin receptor gene-related protein (LEPROT) from Bos taurus (Bovine).